A 712-amino-acid chain; its full sequence is Polyribonucleotide nucleotidyltransferase (712 aa).

Mg(2+)-binding residues include D487 and D493. One can recognise a KH domain in the interval P554–I613. Positions G623 to K691 constitute an S1 motif domain.

This sequence belongs to the polyribonucleotide nucleotidyltransferase family. Mg(2+) is required as a cofactor.

The protein resides in the cytoplasm. The enzyme catalyses RNA(n+1) + phosphate = RNA(n) + a ribonucleoside 5'-diphosphate. Involved in mRNA degradation. Catalyzes the phosphorolysis of single-stranded polyribonucleotides processively in the 3'- to 5'-direction. The protein is Polyribonucleotide nucleotidyltransferase of Bacillus cereus (strain ATCC 14579 / DSM 31 / CCUG 7414 / JCM 2152 / NBRC 15305 / NCIMB 9373 / NCTC 2599 / NRRL B-3711).